The chain runs to 181 residues: Translation initiation factor IF-3, chloroplastic (181 aa).

The protein belongs to the IF-3 family. Monomer.

It is found in the plastid. It localises to the chloroplast. In terms of biological role, IF-3 binds to the 30S ribosomal subunit and shifts the equilibrium between 70S ribosomes and their 50S and 30S subunits in favor of the free subunits, thus enhancing the availability of 30S subunits on which protein synthesis initiation begins. This is Translation initiation factor IF-3, chloroplastic from Gracilaria tenuistipitata var. liui (Red alga).